Consider the following 412-residue polypeptide: Multifunctional CCA protein (412 aa).

Residues G8 and R11 each coordinate ATP. CTP contacts are provided by G8 and R11. Residues E21 and D23 each contribute to the Mg(2+) site. Residues R91, R137, and R140 each contribute to the ATP site. R91, R137, and R140 together coordinate CTP. The HD domain occupies 228–329; sequence CGIHTLMSLQ…WRLLQRLDVL (102 aa).

It belongs to the tRNA nucleotidyltransferase/poly(A) polymerase family. Bacterial CCA-adding enzyme type 1 subfamily. In terms of assembly, monomer. Can also form homodimers and oligomers. Mg(2+) serves as cofactor. Ni(2+) is required as a cofactor.

It catalyses the reaction a tRNA precursor + 2 CTP + ATP = a tRNA with a 3' CCA end + 3 diphosphate. It carries out the reaction a tRNA with a 3' CCA end + 2 CTP + ATP = a tRNA with a 3' CCACCA end + 3 diphosphate. In terms of biological role, catalyzes the addition and repair of the essential 3'-terminal CCA sequence in tRNAs without using a nucleic acid template. Adds these three nucleotides in the order of C, C, and A to the tRNA nucleotide-73, using CTP and ATP as substrates and producing inorganic pyrophosphate. tRNA 3'-terminal CCA addition is required both for tRNA processing and repair. Also involved in tRNA surveillance by mediating tandem CCA addition to generate a CCACCA at the 3' terminus of unstable tRNAs. While stable tRNAs receive only 3'-terminal CCA, unstable tRNAs are marked with CCACCA and rapidly degraded. This chain is Multifunctional CCA protein, found in Acinetobacter baumannii (strain AB307-0294).